The chain runs to 433 residues: Glutamate-1-semialdehyde 2,1-aminomutase (433 aa).

Lys273 is modified (N6-(pyridoxal phosphate)lysine).

Belongs to the class-III pyridoxal-phosphate-dependent aminotransferase family. HemL subfamily. In terms of assembly, homodimer. Pyridoxal 5'-phosphate is required as a cofactor.

The protein localises to the cytoplasm. It catalyses the reaction (S)-4-amino-5-oxopentanoate = 5-aminolevulinate. The protein operates within porphyrin-containing compound metabolism; protoporphyrin-IX biosynthesis; 5-aminolevulinate from L-glutamyl-tRNA(Glu): step 2/2. The polypeptide is Glutamate-1-semialdehyde 2,1-aminomutase (Ralstonia pickettii (strain 12J)).